The sequence spans 546 residues: Glutamate--tRNA ligase (546 aa).

The 'HIGH' region signature appears at 42 to 52 (PSPTGFIHLGN). Residues 293-297 (KLSKR) carry the 'KMSKS' region motif. ATP is bound at residue Lys296.

The protein belongs to the class-I aminoacyl-tRNA synthetase family. Glutamate--tRNA ligase type 1 subfamily. Monomer.

The protein localises to the cytoplasm. It carries out the reaction tRNA(Glu) + L-glutamate + ATP = L-glutamyl-tRNA(Glu) + AMP + diphosphate. In terms of biological role, catalyzes the attachment of glutamate to tRNA(Glu) in a two-step reaction: glutamate is first activated by ATP to form Glu-AMP and then transferred to the acceptor end of tRNA(Glu). The chain is Glutamate--tRNA ligase from Acetivibrio thermocellus (strain ATCC 27405 / DSM 1237 / JCM 9322 / NBRC 103400 / NCIMB 10682 / NRRL B-4536 / VPI 7372) (Clostridium thermocellum).